The primary structure comprises 86 residues: MTKTIFISTKENTGSIQFQIVNFTKKICKLTNHLKLHKKDYLSQRGLRQMLGKRQRLLSYLSKINLTSYNDLILKLKIREAKKDLF.

This sequence belongs to the universal ribosomal protein uS15 family. As to quaternary structure, part of the 30S ribosomal subunit.

It is found in the plastid. The chain is Small ribosomal subunit protein uS15c (rps15) from Cuscuta obtusiflora (Peruvian dodder).